We begin with the raw amino-acid sequence, 494 residues long: 5'-3' exonuclease PLD3 (494 aa).

Residues 1 to 37 are Cytoplasmic-facing; it reads MNPKVEYKQIQSHDEAENQVLQHECHQAKARKYYRCA. Residues 38-58 form a helical; Signal-anchor for type II membrane protein membrane-spanning segment; it reads VVIAIIITLLFCVLASQLLLF. Residues 59–494 lie on the Lumenal side of the membrane; it reads PLFSITSQTT…LSSWKEKCIF (436 aa). A glycan (N-linked (GlcNAc...) asparagine) is linked at Asn-100. Positions 198–225 constitute a PLD phosphodiesterase 1 domain; sequence TDGVLHTKFWVVDSEHFYIGSANMDWRS. Active-site residues include His-203, Lys-205, and Asp-210. 5 N-linked (GlcNAc...) asparagine glycosylation sites follow: Asn-238, Asn-260, Asn-270, Asn-286, and Asn-389. The PLD phosphodiesterase 2 domain maps to 413–439; that stretch reads YARVNHNKYMVTDRVAYIGTSNWSGDY. Active-site residues include His-418, Lys-420, and Asp-425. Asn-434, Asn-451, and Asn-477 each carry an N-linked (GlcNAc...) asparagine glycan.

Belongs to the phospholipase D family. In terms of processing, N-glycosylated. Post-translationally, proteolytically processed to a soluble form that is stable within endosomes and lysosomes. During transport through the secretory pathway becomes proteolysed by cysteine proteases, thereby releasing a stable soluble lysosomal lumenal polypeptide, whereas the transmembrane-bound fragment is rapidly degraded. Its transport route to lysosomes involves ubiquitination and the ESCRT complex. Ubiquitinated. Ubiquitination mediates sorting into lysosomes.

The protein resides in the endoplasmic reticulum membrane. The protein localises to the lysosome lumen. Its subcellular location is the early endosome membrane. It localises to the late endosome membrane. It is found in the golgi apparatus membrane. The protein resides in the endosome membrane. It carries out the reaction Exonucleolytic cleavage in the 5'- to 3'-direction to yield nucleoside 3'-phosphates.. Its function is as follows. 5'-&gt;3' DNA exonuclease which digests single-stranded DNA (ssDNA). Regulates inflammatory cytokine responses via the degradation of nucleic acids, by reducing the concentration of ssDNA able to stimulate TLR9, a nucleotide-sensing receptor in collaboration with PLD4. May be important in myotube formation. Plays a role in lysosomal homeostasis. Involved in the regulation of endosomal protein sorting. The polypeptide is 5'-3' exonuclease PLD3 (pld3) (Xenopus tropicalis (Western clawed frog)).